The following is a 571-amino-acid chain: E3 ubiquitin-protein ligase RNF168 (571 aa).

The RING-type zinc-finger motif lies at 16-55 (CGICMEILVEPVTLPCNHTLCKPCFQSTVEKASLCCPFCR). Serine 70 carries the post-translational modification Phosphoserine. Positions 110-128 (LSKPGELRREYEEEISKVA) match the LR motif 1 motif. Phosphoserine is present on serine 134. A UMI motif motif is present at residues 143 to 151 (EEYIQRLLA). Disordered stretches follow at residues 151–174 (AEEE…QLKS) and 191–292 (EGSI…GADS). The MIU motif 1 signature appears at 168–191 (MEEQLKSDEELARKLSIDINNFCE). Position 197 is a phosphoserine (serine 197). Positions 202-214 (RKSDPVTPKSEKK) are enriched in basic and acidic residues. Residue lysine 210 forms a Glycyl lysine isopeptide (Lys-Gly) (interchain with G-Cter in SUMO2) linkage. A compositionally biased stretch (polar residues) spans 231–242 (PKSQFGSASHSE). The span at 243–263 (AVQEVRKDSVSKDIDSSDRKS) shows a compositional bias: basic and acidic residues. Threonine 362 bears the Phosphothreonine mark. Disordered stretches follow at residues 390 to 422 (NQES…EETE) and 459 to 560 (KEQM…ISQK). Phosphoserine occurs at positions 411, 414, and 415. The MIU motif 2 signature appears at 439-462 (RHKQEEQDRLLALQLQKEVDKEQM). Positions 466–477 (RQKGSPDEYHLR) match the LR motif 2 motif. Serine 470 carries the post-translational modification Phosphoserine. Residues 508-519 (PTPERGSRDKNR) are compositionally biased toward basic and acidic residues. 2 stretches are compositionally biased toward polar residues: residues 520 to 530 (QVSLKMQLKQS) and 549 to 560 (SAHSLQPSISQK). Lysine 528 participates in a covalent cross-link: Glycyl lysine isopeptide (Lys-Gly) (interchain with G-Cter in SUMO2).

The protein belongs to the RNF168 family. Monomer. Interacts with UBE2N/UBC13. Sumoylated with SUMO1 by PIAS4 in response to double-strand breaks (DSBs). In terms of processing, ubiquitinated.

The protein localises to the nucleus. It catalyses the reaction S-ubiquitinyl-[E2 ubiquitin-conjugating enzyme]-L-cysteine + [acceptor protein]-L-lysine = [E2 ubiquitin-conjugating enzyme]-L-cysteine + N(6)-ubiquitinyl-[acceptor protein]-L-lysine.. The protein operates within protein modification; protein ubiquitination. E3 ubiquitin-protein ligase required for accumulation of repair proteins to sites of DNA damage. Acts with UBE2N/UBC13 to amplify the RNF8-dependent histone ubiquitination. Recruited to sites of DNA damage at double-strand breaks (DSBs) by binding to ubiquitinated histone H2A and H2AX and amplifies the RNF8-dependent H2A ubiquitination, promoting the formation of 'Lys-63'-linked ubiquitin conjugates. This leads to concentrate ubiquitinated histones H2A and H2AX at DNA lesions to the threshold required for recruitment of TP53BP1 and BRCA1. Also recruited at DNA interstrand cross-links (ICLs) sites and promotes accumulation of 'Lys-63'-linked ubiquitination of histones H2A and H2AX, leading to recruitment of FAAP20/C1orf86 and Fanconi anemia (FA) complex, followed by interstrand cross-link repair. H2A ubiquitination also mediates the ATM-dependent transcriptional silencing at regions flanking DSBs in cis, a mechanism to avoid collision between transcription and repair intermediates. Also involved in class switch recombination in immune system, via its role in regulation of DSBs repair. Following DNA damage, promotes the ubiquitination and degradation of JMJD2A/KDM4A in collaboration with RNF8, leading to unmask H4K20me2 mark and promote the recruitment of TP53BP1 at DNA damage sites. Not able to initiate 'Lys-63'-linked ubiquitination in vitro; possibly due to partial occlusion of the UBE2N/UBC13-binding region. Catalyzes monoubiquitination of 'Lys-13' and 'Lys-15' of nucleosomal histone H2A (H2AK13Ub and H2AK15Ub, respectively). This Homo sapiens (Human) protein is E3 ubiquitin-protein ligase RNF168.